Consider the following 226-residue polypeptide: 7-cyano-7-deazaguanine synthase (226 aa).

8-18 (ISGGLDSTTCL) is a binding site for ATP. Zn(2+) is bound by residues Cys188, Cys198, Cys201, and Cys204.

Belongs to the QueC family. Zn(2+) serves as cofactor.

It catalyses the reaction 7-carboxy-7-deazaguanine + NH4(+) + ATP = 7-cyano-7-deazaguanine + ADP + phosphate + H2O + H(+). It functions in the pathway purine metabolism; 7-cyano-7-deazaguanine biosynthesis. Catalyzes the ATP-dependent conversion of 7-carboxy-7-deazaguanine (CDG) to 7-cyano-7-deazaguanine (preQ(0)). The chain is 7-cyano-7-deazaguanine synthase from Coxiella burnetii (strain RSA 493 / Nine Mile phase I).